A 553-amino-acid chain; its full sequence is Phosphomethylpyrimidine synthase (553 aa).

Substrate is bound by residues asparagine 192, methionine 221, tyrosine 250, histidine 286, 306–308 (SRG), 347–350 (DGLR), and glutamate 386. A Zn(2+)-binding site is contributed by histidine 390. A substrate-binding site is contributed by tyrosine 413. Histidine 454 serves as a coordination point for Zn(2+). Residues cysteine 534, cysteine 537, and cysteine 542 each coordinate [4Fe-4S] cluster.

It belongs to the ThiC family. In terms of assembly, homodimer. [4Fe-4S] cluster is required as a cofactor.

It carries out the reaction 5-amino-1-(5-phospho-beta-D-ribosyl)imidazole + S-adenosyl-L-methionine = 4-amino-2-methyl-5-(phosphooxymethyl)pyrimidine + CO + 5'-deoxyadenosine + formate + L-methionine + 3 H(+). Its pathway is cofactor biosynthesis; thiamine diphosphate biosynthesis. Functionally, catalyzes the synthesis of the hydroxymethylpyrimidine phosphate (HMP-P) moiety of thiamine from aminoimidazole ribotide (AIR) in a radical S-adenosyl-L-methionine (SAM)-dependent reaction. This is Phosphomethylpyrimidine synthase from Anaplasma marginale (strain St. Maries).